The chain runs to 394 residues: Metallophosphoesterase 1 (394 aa).

Residues 27–47 form a helical membrane-spanning segment; sequence TVVVISVLLFCEYFIYYLVLF. The a divalent metal cation site is built by aspartate 74, aspartate 116, asparagine 154, histidine 247, histidine 301, and histidine 303. Residues 354 to 374 form a helical membrane-spanning segment; that stretch reads TVLTTYCAAAAFLLVLILAHF.

The protein belongs to the metallophosphoesterase superfamily. MPPE1 family. Interacts with GPI-anchor proteins (via the GPI portion). Interacts with TMED10. It depends on Mn(2+) as a cofactor.

It is found in the endoplasmic reticulum-Golgi intermediate compartment membrane. Its function is as follows. Metallophosphoesterase that catalyzes the removal of a side-chain ethanolamine-phosphate (EtNP) from the second mannose of the GPI-anchor protein intermediate. Participates in the glycan remodeling steps of GPI-anchor maturation to allow an efficient transport of GPI-anchor proteins from the endoplasmic reticulum to the Golgi. The chain is Metallophosphoesterase 1 from Rattus norvegicus (Rat).